Consider the following 395-residue polypeptide: Elongation factor Tu (395 aa).

The 195-residue stretch at 10–204 folds into the tr-type G domain; that stretch reads KPHVNIGTIG…AVDNYIPHPV (195 aa). Positions 19-26 are G1; the sequence is GHVDHGKT. Position 19–26 (19–26) interacts with GTP; it reads GHVDHGKT. Position 26 (T26) interacts with Mg(2+). A G2 region spans residues 60–64; that stretch reads GITIS. A G3 region spans residues 81-84; that stretch reads DCPG. GTP contacts are provided by residues 81 to 85 and 136 to 139; these read DCPGH and NKVD. Positions 136–139 are G4; the sequence is NKVD. Positions 174-176 are G5; it reads SAL.

The protein belongs to the TRAFAC class translation factor GTPase superfamily. Classic translation factor GTPase family. EF-Tu/EF-1A subfamily. As to quaternary structure, monomer.

Its subcellular location is the cytoplasm. It catalyses the reaction GTP + H2O = GDP + phosphate + H(+). Its function is as follows. GTP hydrolase that promotes the GTP-dependent binding of aminoacyl-tRNA to the A-site of ribosomes during protein biosynthesis. This chain is Elongation factor Tu, found in Rickettsia akari (strain Hartford).